Consider the following 508-residue polypeptide: Photosystem II CP47 reaction center protein (508 aa).

6 helical membrane-spanning segments follow: residues 21–36 (SVHIMHTALVAGWAGS), 101–115 (IVFSGLCFLAAIWHW), 140–156 (GIHLFLSGVACFGFGAF), 203–218 (IAAGTLGILAGLFHLS), 237–252 (VLSSSIAAVFFAAFVV), and 457–472 (SFALLFFFGHIWHGSR).

It belongs to the PsbB/PsbC family. PsbB subfamily. In terms of assembly, PSII is composed of 1 copy each of membrane proteins PsbA, PsbB, PsbC, PsbD, PsbE, PsbF, PsbH, PsbI, PsbJ, PsbK, PsbL, PsbM, PsbT, PsbX, PsbY, PsbZ, Psb30/Ycf12, at least 3 peripheral proteins of the oxygen-evolving complex and a large number of cofactors. It forms dimeric complexes. Binds multiple chlorophylls. PSII binds additional chlorophylls, carotenoids and specific lipids. serves as cofactor.

The protein resides in the plastid. The protein localises to the chloroplast thylakoid membrane. In terms of biological role, one of the components of the core complex of photosystem II (PSII). It binds chlorophyll and helps catalyze the primary light-induced photochemical processes of PSII. PSII is a light-driven water:plastoquinone oxidoreductase, using light energy to abstract electrons from H(2)O, generating O(2) and a proton gradient subsequently used for ATP formation. This chain is Photosystem II CP47 reaction center protein, found in Draba nemorosa (Woodland whitlowgrass).